A 526-amino-acid polypeptide reads, in one-letter code: mRNA export factor ICP27 homolog (526 aa).

4 residues coordinate Zn(2+): Cys239, His344, Cys346, and Cys351. The CHC2-type zinc-finger motif lies at 239–351; it reads CVFNDNGHGD…NNHQCDDIGC (113 aa).

This sequence belongs to the HHV-1 ICP27 protein family.

The protein resides in the virion tegument. It localises to the virion. It is found in the host nucleus. The protein localises to the host cytoplasm. In terms of biological role, immediate early (EI) protein that plays many roles during productive infection including regulation of viral gene expression and nuclear export of intronless viral RNAs. In Human herpesvirus 7 (strain JI) (HHV-7), this protein is mRNA export factor ICP27 homolog.